The chain runs to 164 residues: Nucleotide-binding protein Mfla_1706 (164 aa).

Belongs to the YajQ family.

In terms of biological role, nucleotide-binding protein. The sequence is that of Nucleotide-binding protein Mfla_1706 from Methylobacillus flagellatus (strain ATCC 51484 / DSM 6875 / VKM B-1610 / KT).